Here is a 358-residue protein sequence, read N- to C-terminus: Acyl-CoA Delta-12 desaturase (358 aa).

Transmembrane regions (helical) follow at residues 30 to 50 (IILY…AMFY) and 55 to 75 (TVFY…AGSH). Fe cation-binding residues include H75, H80, H112, H115, and H116. Positions 75-80 (HRLWAH) match the Histidine box-1 motif. The Histidine box-2 motif lies at 112–116 (HRVHH). The next 2 membrane-spanning stretches (helical) occupy residues 175-195 (TFFA…YFWG) and 200-220 (TAFF…TFLV). Fe cation contacts are provided by H225, H254, H257, and H258. The Histidine box-3 signature appears at 254–258 (HNYHH).

The protein belongs to the fatty acid desaturase type 1 family. Fe(2+) is required as a cofactor.

Its subcellular location is the membrane. It carries out the reaction (9Z)-octadecenoyl-CoA + 2 Fe(II)-[cytochrome b5] + O2 + 2 H(+) = (9Z,12Z)-octadecadienoyl-CoA + 2 Fe(III)-[cytochrome b5] + 2 H2O. The catalysed reaction is (9Z)-hexadecenoyl-CoA + 2 Fe(II)-[cytochrome b5] + O2 + 2 H(+) = (9Z,12Z)-hexadecadienoyl-CoA + 2 Fe(III)-[cytochrome b5] + 2 H2O. Functionally, catalyzes the formation of a Delta12 double bond, acting on monounsaturated fatty acyl substrates like palmitoleoyl-CoA ((9Z)-hexadecenoyl-CoA) and oleoyl-CoA ((9Z)-octadecenoyl-CoA) with higher desaturation activity on (9Z)-octadecenoyl-CoA than (9Z)-hexadecenoyl-CoA. Requires preexisting cis double bond at the Delta9 position of fatty acyls to be able to insert the Delta12 double bond. Delta12-desaturation of (9Z)-octadecenoyl-CoA in insects produces (9Z,12Z)-octadecadienoyl-CoA (linoleoyl-CoA) which may be used to supply precursors of crucial mediators of immunity and reproduction and other essential functions. The chain is Acyl-CoA Delta-12 desaturase from Tribolium castaneum (Red flour beetle).